The following is a 160-amino-acid chain: Cytochrome b6-f complex subunit 4 (160 aa).

3 consecutive transmembrane segments (helical) span residues 36-56, 95-115, and 131-151; these read LLYI…GLAV, LLGV…PFLE, and TVFL…TLPI.

The protein belongs to the cytochrome b family. PetD subfamily. As to quaternary structure, the 4 large subunits of the cytochrome b6-f complex are cytochrome b6, subunit IV (17 kDa polypeptide, petD), cytochrome f and the Rieske protein, while the 4 small subunits are petG, petL, petM and petN. The complex functions as a dimer.

It localises to the plastid. Its subcellular location is the chloroplast thylakoid membrane. In terms of biological role, component of the cytochrome b6-f complex, which mediates electron transfer between photosystem II (PSII) and photosystem I (PSI), cyclic electron flow around PSI, and state transitions. In Morus indica (Mulberry), this protein is Cytochrome b6-f complex subunit 4.